We begin with the raw amino-acid sequence, 361 residues long: GTPase Obg (361 aa).

Residues 1–159 (MKFVDEAFID…KNLKLELKVL (159 aa)) form the Obg domain. Residues 160–334 (ADVGLLGMPN…LIKTIYQHVK (175 aa)) form the OBG-type G domain. Residues 166–173 (GMPNAGKS), 191–195 (FTTLH), 213–216 (DLPG), 284–287 (NKLD), and 315–317 (SAL) each bind GTP. Mg(2+) contacts are provided by serine 173 and threonine 193. A disordered region spans residues 339–361 (SEQPVEEVDPRFVPLPPESPETP). A compositionally biased stretch (pro residues) spans 351–361 (VPLPPESPETP).

The protein belongs to the TRAFAC class OBG-HflX-like GTPase superfamily. OBG GTPase family. Monomer. The cofactor is Mg(2+).

The protein resides in the cytoplasm. Its function is as follows. An essential GTPase which binds GTP, GDP and possibly (p)ppGpp with moderate affinity, with high nucleotide exchange rates and a fairly low GTP hydrolysis rate. Plays a role in control of the cell cycle, stress response, ribosome biogenesis and in those bacteria that undergo differentiation, in morphogenesis control. This is GTPase Obg from Polaromonas sp. (strain JS666 / ATCC BAA-500).